We begin with the raw amino-acid sequence, 232 residues long: TIR domain-containing adapter molecule 2 (232 aa).

Basic and acidic residues predominate over residues 1 to 10 (MGIGKSKMDP). Residues 1-71 (MGIGKSKMDP…VEERPEEDTE (71 aa)) are disordered. Gly-2 carries N-myristoyl glycine lipidation. Over residues 19–29 (KSQSVDTSQSH) the composition is skewed to polar residues. Basic and acidic residues predominate over residues 30-42 (HMSDSKQSEEISL). Residues 55-71 (PAEEQEGVEERPEEDTE) are compositionally biased toward acidic residues. The TIR domain maps to 70-226 (TEEEVFLKFV…AIWKETRNTV (157 aa)). Tyr-164 carries the phosphotyrosine modification.

As to quaternary structure, homodimer. Interacts with TLR4, TICAM1, IRF3 and IRF7 in response to LPS. Interacts with IL1R1, IL1RAP, IRAK2, IRAK3 and TRAF6. Interacts with protein kinase-inactive mutants of IRAK1 and IRAK4. Isoform 1 interacts with isoform 2; the interaction occurs in late endosomes and disrupts the interaction between isoform 1 and TICAM1. Interacts with MYD88; the interaction decreases after IL-18 stimulation in a time-dependent manner. Interacts with IL18R1 and IL18RAP. Interacts with TLR2. Interacts with RAB11FIP2. In terms of processing, myristoylated. Required for membrane association which is critical for its ability to initiate efficient signaling. Post-translationally, phosphorylated by PRKCE in response to LPS. Phosphorylation is essential for its function. It is depleted from the membrane upon phosphorylation. Tyrosine phosphorylation is inhibited by phosphatase PTPN4.

The protein resides in the cytoplasm. The protein localises to the golgi apparatus. It is found in the cell membrane. Its subcellular location is the endoplasmic reticulum. It localises to the early endosome. The protein resides in the late endosome. The protein localises to the cell projection. It is found in the phagocytic cup. Functions as a sorting adapter in different signaling pathways to facilitate downstream signaling leading to type I interferon induction. In TLR4 signaling, physically bridges TLR4 and TICAM1 and functionally transmits signal to TICAM1 in early endosomes after endocytosis of TLR4. In TLR2 signaling, physically bridges TLR2 and MYD88 and is required for the TLR2-dependent movement of MYD88 to endosomes following ligand engagement. Involved in IL-18 signaling and is proposed to function as a sorting adapter for MYD88 in IL-18 signaling during adaptive immune response. Forms a complex with RAB11FIP2 that is recruited to the phagosomes to promote the activation of the actin-regulatory GTPases RAC1 and CDC42 and subsequent phagocytosis of Gram-negative bacteria. The sequence is that of TIR domain-containing adapter molecule 2 (TICAM2) from Bos taurus (Bovine).